The sequence spans 828 residues: Periplasmic nitrate reductase (828 aa).

The segment at residues 1–31 (MKLSRRSFMKANAVAAAAAAAGLSVPGVARA) is a signal peptide (tat-type signal). The 4Fe-4S Mo/W bis-MGD-type domain maps to 39-95 (IKWDKAPCRFCGTGCGVLVGTQQGRVVACQGDPDAPVNRGLNCIKGYFLPKIMYGKD). Residues C46, C49, C53, and C81 each coordinate [4Fe-4S] cluster. Mo-bis(molybdopterin guanine dinucleotide)-binding positions include K83, Q150, N175, C179, 212 to 219 (WGSNMAEM), 243 to 247 (STFQH), 262 to 264 (QSD), M372, Q376, N482, 508 to 509 (SD), K531, D558, and 718 to 727 (TGRVLEHWHT). Residue F794 coordinates substrate. The Mo-bis(molybdopterin guanine dinucleotide) site is built by N802 and K819.

It belongs to the prokaryotic molybdopterin-containing oxidoreductase family. NasA/NapA/NarB subfamily. As to quaternary structure, component of the periplasmic nitrate reductase NapAB complex composed of NapA and NapB. Requires [4Fe-4S] cluster as cofactor. The cofactor is Mo-bis(molybdopterin guanine dinucleotide). Post-translationally, predicted to be exported by the Tat system. The position of the signal peptide cleavage has not been experimentally proven.

The protein localises to the periplasm. It carries out the reaction 2 Fe(II)-[cytochrome] + nitrate + 2 H(+) = 2 Fe(III)-[cytochrome] + nitrite + H2O. Functionally, catalytic subunit of the periplasmic nitrate reductase complex NapAB. Receives electrons from NapB and catalyzes the reduction of nitrate to nitrite. The sequence is that of Periplasmic nitrate reductase from Salmonella paratyphi A (strain ATCC 9150 / SARB42).